Reading from the N-terminus, the 396-residue chain is MSKEKFERKKPHINVGTIGHVDHGKTTLTAALTKVLAEAHGGDARAFDQIDNAPEERARGITIATAHVEYESESRHYAHVDCPGHADYVKNMITGAAQMDGSILVVSAADGPMPQTREHILLARQVGVPAIVVFLNKADMVDDAELLELVEMEVRELLSDYDFDGDNIPVVTGSALKALEGDDSEMGRPAIIKLVEAMDAHIPQPERPVDGDFLMPIEDVFSISGRGTVVTGRVERGVIKVGEEVEIVGITDTRKTTCTGVEMFRKLLDQGEAGDNIGALLRGIKRDDVERGQVLCKPKSITPHTHFEAEVYVLSKDEGGRHTPFFNGYRPQFYFRTTDVTGTVTLPEGTEMVMPGDNVKMTVQLIAPIAMEDGLRFAIREGGRTVGAGVVSKILD.

In terms of domain architecture, tr-type G spans Lys-10–Glu-206. The tract at residues Gly-19–Thr-26 is G1. Residue Gly-19–Thr-26 coordinates GTP. Thr-26 contributes to the Mg(2+) binding site. Positions Gly-60–Ala-64 are G2. Residues Asp-81–Gly-84 form a G3 region. GTP is bound by residues Asp-81–His-85 and Asn-136–Asp-139. Residues Asn-136–Asp-139 form a G4 region. Residues Ser-174–Leu-176 are G5.

This sequence belongs to the TRAFAC class translation factor GTPase superfamily. Classic translation factor GTPase family. EF-Tu/EF-1A subfamily. Monomer.

Its subcellular location is the cytoplasm. It carries out the reaction GTP + H2O = GDP + phosphate + H(+). Its function is as follows. GTP hydrolase that promotes the GTP-dependent binding of aminoacyl-tRNA to the A-site of ribosomes during protein biosynthesis. The polypeptide is Elongation factor Tu 2 (Halorhodospira halophila (strain DSM 244 / SL1) (Ectothiorhodospira halophila (strain DSM 244 / SL1))).